The chain runs to 204 residues: High frequency lysogenization protein HflD homolog (204 aa).

This sequence belongs to the HflD family.

It localises to the cytoplasm. The protein localises to the cell inner membrane. This Ruthia magnifica subsp. Calyptogena magnifica protein is High frequency lysogenization protein HflD homolog.